The sequence spans 291 residues: START domain-containing protein 10 (291 aa).

Position 1 is an N-acetylmethionine (methionine 1). The interval 1 to 23 is disordered; it reads MEKPAASTEPQGSRPALGRESVQ. Residues 14-224 enclose the START domain; it reads RPALGRESVQ…MYKACIKYPE (211 aa). N6-succinyllysine is present on residues lysine 94, lysine 197, and lysine 202. 4 positions are modified to phosphoserine: serine 253, serine 259, serine 284, and serine 289. Residues 260 to 291 are disordered; that stretch reads LENIDESAVTESREERAGGAGGEGSDDDTSLT.

Phosphorylation at Ser-284 by CK2 negatively regulates lipid transfer activity, possibly by decreasing membrane association. Testis, kidney, liver, and intestine with the highest level in the testis.

The protein localises to the cell projection. Its subcellular location is the cilium. It localises to the flagellum. The protein resides in the cytoplasm. It is found in the membrane. Phospholipid transfer protein that preferentially selects lipid species containing a palmitoyl or stearoyl chain on the sn-1 and an unsaturated fatty acyl chain (18:1 or 18:2) on the sn-2 position. Able to transfer phosphatidylcholine (PC) and phosphatidyetanolamline (PE) between membranes. May play metabolic roles in sperm maturation or fertilization. This is START domain-containing protein 10 (Stard10) from Mus musculus (Mouse).